Consider the following 83-residue polypeptide: Hainantoxin-III 8 (83 aa).

The signal sequence occupies residues 1–21; that stretch reads MKASMFLALAGLVLLFVVGYA. The propeptide occupies 22–48; the sequence is SESEEKEFPRELLSKIFAVDDFTGEER. Cystine bridges form between C50–C65, C57–C70, and C64–C77. The residue at position 81 (L81) is a Leucine amide.

This sequence belongs to the neurotoxin 10 (Hwtx-1) family. 15 (Hntx-3) subfamily. As to quaternary structure, monomer. In terms of tissue distribution, expressed by the venom gland.

It is found in the secreted. Selective antagonist of neuronal tetrodotoxin (TTX)-sensitive voltage-gated sodium channels (IC(50)=1270 nM on Nav1.1/SCN1A, 270 nM on Nav1.2/SCN2A, 491 nM on Nav1.3/SCN3A and 232 nM on Nav1.7/SCN9A). This toxin suppress Nav1.7 current amplitude without significantly altering the activation, inactivation, and repriming kinetics. Short extreme depolarizations partially activate the toxin-bound channel, indicating voltage-dependent inhibition of this toxin. This toxin increases the deactivation of the Nav1.7 current after extreme depolarizations. The toxin-Nav1.7 complex is gradually dissociated upon prolonged strong depolarizations in a voltage-dependent manner, and the unbound toxin rebinds to Nav1.7 after a long repolarization. Moreover, analysis of chimeric channels showed that the DIIS3-S4 linker is critical for toxin binding to Nav1.7. These data are consistent with this toxin interacting with Nav1.7 site 4 and trapping the domain II voltage sensor in the closed state. In Cyriopagopus hainanus (Chinese bird spider), this protein is Hainantoxin-III 8.